The sequence spans 308 residues: Ribosomal RNA large subunit methyltransferase F (308 aa).

This sequence belongs to the methyltransferase superfamily. METTL16/RlmF family.

The protein resides in the cytoplasm. The catalysed reaction is adenosine(1618) in 23S rRNA + S-adenosyl-L-methionine = N(6)-methyladenosine(1618) in 23S rRNA + S-adenosyl-L-homocysteine + H(+). Functionally, specifically methylates the adenine in position 1618 of 23S rRNA. The polypeptide is Ribosomal RNA large subunit methyltransferase F (Escherichia coli O6:H1 (strain CFT073 / ATCC 700928 / UPEC)).